The following is a 119-amino-acid chain: Large ribosomal subunit protein uL14c (119 aa).

This sequence belongs to the universal ribosomal protein uL14 family. As to quaternary structure, part of the 50S ribosomal subunit.

It is found in the plastid. It localises to the chloroplast. Its function is as follows. Binds to 23S rRNA. This is Large ribosomal subunit protein uL14c from Ostreococcus tauri.